The primary structure comprises 125 residues: Large ribosomal subunit protein bL12 (125 aa).

The protein belongs to the bacterial ribosomal protein bL12 family. Homodimer. Part of the ribosomal stalk of the 50S ribosomal subunit. Forms a multimeric L10(L12)X complex, where L10 forms an elongated spine to which 2 to 4 L12 dimers bind in a sequential fashion. Binds GTP-bound translation factors.

Its function is as follows. Forms part of the ribosomal stalk which helps the ribosome interact with GTP-bound translation factors. Is thus essential for accurate translation. This chain is Large ribosomal subunit protein bL12, found in Rickettsia africae (strain ESF-5).